Reading from the N-terminus, the 1084-residue chain is TNF receptor-associated factor family protein DDB_G0272098 (1084 aa).

Residues 19–103 (YYCPDCGELL…KNRYYETKNF (85 aa)) form the LIM zinc-binding domain. 2 consecutive TRAF-type zinc fingers follow at residues 122-190 (KHIK…IDHE) and 191-248 (IHLS…YNMS). Residues 265–321 (IEEQNQDIKELHNFIENHLSKKFIDLDTIVNIQKYLIKNKNQKISQLTEIIKRVDNS) adopt a coiled-coil conformation. Disordered stretches follow at residues 348 to 392 (YKNS…NINE), 490 to 523 (IRQQ…NTTI), 537 to 656 (NNNI…KDGL), and 709 to 897 (SIVE…NDDD). Low complexity-rich tracts occupy residues 349 to 375 (KNSN…TNEN), 492 to 509 (QQQQ…QQQQ), 537 to 549 (NNNI…NNNK), and 556 to 570 (ITAA…TTST). Residues 489–553 (LIRQQQQQQQ…NNNNNKNNDD (65 aa)) adopt a coiled-coil conformation. Residues 571 to 586 (HTILNGTNNEASMTDI) are compositionally biased toward polar residues. The span at 587–637 (NETTSTTTTAETTEATASESTEESNNTAETTTTTTTTTTTITTAAETVNST) shows a compositional bias: low complexity. Over residues 644–656 (TSEKVEEKGKDGL) the composition is skewed to basic and acidic residues. Residues 735 to 852 (NGNENENENE…NNNNNNNENV (118 aa)) adopt a coiled-coil conformation. The span at 739–757 (NENENENENENENENENEN) shows a compositional bias: acidic residues. Residues 774 to 785 (SNINTSNDTEPT) show a composition bias toward polar residues. A compositionally biased stretch (basic and acidic residues) spans 790–799 (EDIKKNKENE). The span at 809–849 (NNNIKSVEDTNNNNNNNNNNNNNNNNNNNNNNNNNNNNNNN) shows a compositional bias: low complexity. Composition is skewed to basic and acidic residues over residues 853–864 (YDIKKDRNRENV) and 875–892 (ENGK…SEDK). The region spanning 909–1042 (IFRNQILFKD…DNCFIVNLEV (134 aa)) is the MATH domain. Residues 1056-1084 (LLQKSSPPAATTTTTTSSSSSKTTPKTKR) are disordered. The segment covering 1059-1084 (KSSPPAATTTTTTSSSSSKTTPKTKR) has biased composition (low complexity).

This sequence belongs to the TNF receptor-associated factor family.

Its subcellular location is the cytoplasm. Its function is as follows. Probable adapter protein and signal transducer that links members of the tumor necrosis factor receptor family to different signaling pathways by association with the receptor cytoplasmic domain and kinases. In Dictyostelium discoideum (Social amoeba), this protein is TNF receptor-associated factor family protein DDB_G0272098.